The primary structure comprises 276 residues: Pantothenate synthetase (276 aa).

An ATP-binding site is contributed by 27-34 (MGALHKGH). The active-site Proton donor is His-34. Gln-58 lines the (R)-pantoate pocket. Gln-58 serves as a coordination point for beta-alanine. 147–150 (GKKD) contacts ATP. Gln-153 provides a ligand contact to (R)-pantoate. Residues Val-176 and 184 to 187 (LSSR) each bind ATP.

Belongs to the pantothenate synthetase family. Homodimer.

The protein localises to the cytoplasm. It catalyses the reaction (R)-pantoate + beta-alanine + ATP = (R)-pantothenate + AMP + diphosphate + H(+). It functions in the pathway cofactor biosynthesis; (R)-pantothenate biosynthesis; (R)-pantothenate from (R)-pantoate and beta-alanine: step 1/1. Its function is as follows. Catalyzes the condensation of pantoate with beta-alanine in an ATP-dependent reaction via a pantoyl-adenylate intermediate. The chain is Pantothenate synthetase from Helicobacter pylori (strain ATCC 700392 / 26695) (Campylobacter pylori).